The chain runs to 475 residues: Putative histidine permease (475 aa).

Helical transmembrane passes span 20–40 (LFMISLGGVIGTGLFLSTGYT), 44–64 (AGPGGTILAYVIGGLMMYLVM), 87–107 (FIGPSTGFMVGIMYWINWVVT), 127–147 (SVWMWSAIFAALLFICNAFSV), 162–182 (IVTIILFIILGGAAMFGLISL), 199–219 (GLFPNGFLAVFIAMISVSFAF), 246–266 (VAWRTVIFFIGAVFILSGLIS), 277–297 (FVAVFAEIGIPYAADIMNFVI), 341–361 (ALMISMAVSCLSLVSSIVAPG), 363–383 (VYVVMVAIAGFAGVVVWMSIA), 410–430 (YPLMPIAALLLCSASCIGLAF), and 434–454 (QRIALFCGVPCIILCYLIYHF).

It belongs to the amino acid-polyamine-organocation (APC) superfamily.

The protein resides in the cell membrane. This Bacillus subtilis (strain 168) protein is Putative histidine permease (hutM).